A 141-amino-acid polypeptide reads, in one-letter code: Large ribosomal subunit protein uL11B (141 aa).

This sequence belongs to the universal ribosomal protein uL11 family. As to quaternary structure, part of the ribosomal stalk of the 50S ribosomal subunit. Interacts with L10 and the large rRNA to form the base of the stalk. L10 forms an elongated spine to which L12 dimers bind in a sequential fashion forming a multimeric L10(L12)X complex. Post-translationally, one or more lysine residues are methylated.

In terms of biological role, forms part of the ribosomal stalk which helps the ribosome interact with GTP-bound translation factors. In Halalkalibacterium halodurans (strain ATCC BAA-125 / DSM 18197 / FERM 7344 / JCM 9153 / C-125) (Bacillus halodurans), this protein is Large ribosomal subunit protein uL11B.